We begin with the raw amino-acid sequence, 384 residues long: Mannitol-1-phosphate 5-dehydrogenase (384 aa).

NAD(+) is bound at residue alanine 3 to glycine 14.

Belongs to the mannitol dehydrogenase family.

The enzyme catalyses D-mannitol 1-phosphate + NAD(+) = beta-D-fructose 6-phosphate + NADH + H(+). The protein is Mannitol-1-phosphate 5-dehydrogenase (mtlD) of Clostridium acetobutylicum (strain ATCC 824 / DSM 792 / JCM 1419 / IAM 19013 / LMG 5710 / NBRC 13948 / NRRL B-527 / VKM B-1787 / 2291 / W).